A 977-amino-acid chain; its full sequence is Disks large-associated protein 1 (977 aa).

Disordered stretches follow at residues threonine 150–serine 203 and lysine 349–alanine 371. 14 positions are modified to phosphoserine: serine 169, serine 356, serine 359, serine 362, serine 366, serine 383, serine 412, serine 415, serine 419, serine 422, serine 431, serine 503, serine 510, and serine 562. Position 563 is a phosphothreonine (threonine 563). Serine 565 and serine 589 each carry phosphoserine. Phosphothreonine is present on threonine 590. 2 positions are modified to phosphoserine: serine 592 and serine 595. 2 interaction with DYL2 regions span residues leucine 650 to glutamate 661 and serine 672 to glutamate 683. A disordered region spans residues tryptophan 899–serine 965. 2 stretches are compositionally biased toward basic and acidic residues: residues aspartate 903–alanine 912 and isoleucine 928–lysine 943. Phosphoserine is present on serine 932. Residues valine 954–alanine 963 are compositionally biased toward polar residues. The PDZ-binding signature appears at threonine 975–leucine 977.

The protein belongs to the SAPAP family. As to quaternary structure, interacts with guanylate kinase-like domain of DLG1, DLG2, DLG3, DLG4 and AIP1. Interacts with the PDZ domain of SHANK1, SHANK2 and SHANK3. Found in a complex with DLG4 and SHANK1, SHANK2 or SHANK3. Found in a complex with DLG4 and BEGAIN. Interacts with DYL2 and LRFN1. Interacts with MPP2 (via the SH3-Guanylate kinase-like sub-module). Post-translationally, ubiquitinated by TRIM3; leading to proteasomal degradation. As to expression, expressed in brain.

The protein resides in the cell membrane. The protein localises to the postsynaptic density. It localises to the synapse. Its function is as follows. Part of the postsynaptic scaffold in neuronal cells. The chain is Disks large-associated protein 1 (DLGAP1) from Homo sapiens (Human).